Here is a 335-residue protein sequence, read N- to C-terminus: Heme A synthase (335 aa).

8 helical membrane passes run 9 to 29, 90 to 110, 120 to 140, 156 to 176, 197 to 217, 255 to 275, 283 to 303, and 309 to 329; these read VAIWLFLCSIMIVLMVGIGGF, YVHRLFARLTGLIFILPFIYF, VVIRLSIALSFGVLQAFTGWY, MLTLHLLLALVIFALLSYQFF, VGIILILIVVQIIFGAFVAGL, VQFIHRTLALLILVLTTVLTI, VYVMLLSVIIQIILGVVTLLL, and IAISHQMFSFILFGSGLCFLC. His-259 lines the heme pocket. His-313 serves as a coordination point for heme.

It belongs to the COX15/CtaA family. Type 2 subfamily. In terms of assembly, interacts with CtaB. Heme b serves as cofactor.

Its subcellular location is the cell membrane. The enzyme catalyses Fe(II)-heme o + 2 A + H2O = Fe(II)-heme a + 2 AH2. It participates in porphyrin-containing compound metabolism; heme A biosynthesis; heme A from heme O: step 1/1. In terms of biological role, catalyzes the conversion of heme O to heme A by two successive hydroxylations of the methyl group at C8. The first hydroxylation forms heme I, the second hydroxylation results in an unstable dihydroxymethyl group, which spontaneously dehydrates, resulting in the formyl group of heme A. In Wolbachia sp. subsp. Brugia malayi (strain TRS), this protein is Heme A synthase.